A 458-amino-acid polypeptide reads, in one-letter code: ATP synthase subunit beta (458 aa).

147–154 (GGAGVGKT) is a binding site for ATP.

Belongs to the ATPase alpha/beta chains family. In terms of assembly, F-type ATPases have 2 components, CF(1) - the catalytic core - and CF(0) - the membrane proton channel. CF(1) has five subunits: alpha(3), beta(3), gamma(1), delta(1), epsilon(1). CF(0) has three main subunits: a(1), b(2) and c(9-12). The alpha and beta chains form an alternating ring which encloses part of the gamma chain. CF(1) is attached to CF(0) by a central stalk formed by the gamma and epsilon chains, while a peripheral stalk is formed by the delta and b chains.

It is found in the cell inner membrane. It carries out the reaction ATP + H2O + 4 H(+)(in) = ADP + phosphate + 5 H(+)(out). Produces ATP from ADP in the presence of a proton gradient across the membrane. The catalytic sites are hosted primarily by the beta subunits. This is ATP synthase subunit beta from Chromohalobacter salexigens (strain ATCC BAA-138 / DSM 3043 / CIP 106854 / NCIMB 13768 / 1H11).